The chain runs to 143 residues: Fluoride-specific ion channel FluC (143 aa).

Transmembrane regions (helical) follow at residues 6 to 26, 38 to 58, 70 to 90, and 103 to 123; these read CILVMIGGALGTLARYVVSVL, TILINVTGSFIIGLFGTLTLA, LFVMIGLCGGYTTFSSFSLQT, and MVNVCASVVLCVLAVALGHVV. Gly-78 and Thr-81 together coordinate Na(+).

This sequence belongs to the fluoride channel Fluc/FEX (TC 1.A.43) family.

Its subcellular location is the cell inner membrane. The catalysed reaction is fluoride(in) = fluoride(out). Its activity is regulated as follows. Na(+) is not transported, but it plays an essential structural role and its presence is essential for fluoride channel function. In terms of biological role, fluoride-specific ion channel. Important for reducing fluoride concentration in the cell, thus reducing its toxicity. The polypeptide is Fluoride-specific ion channel FluC (Methylobacterium radiotolerans (strain ATCC 27329 / DSM 1819 / JCM 2831 / NBRC 15690 / NCIMB 10815 / 0-1)).